A 428-amino-acid polypeptide reads, in one-letter code: Peptidase B (428 aa).

Mn(2+) is bound by residues Lys195 and Asp200. Residue Lys207 is part of the active site. Residues Asp218, Asp277, and Glu279 each coordinate Mn(2+). Arg281 is an active-site residue.

The protein belongs to the peptidase M17 family. Homohexamer. Mn(2+) serves as cofactor.

Its subcellular location is the cytoplasm. The enzyme catalyses Release of an N-terminal amino acid, Xaa, from a peptide or arylamide. Xaa is preferably Glu or Asp but may be other amino acids, including Leu, Met, His, Cys and Gln.. Functionally, probably plays an important role in intracellular peptide degradation. The chain is Peptidase B from Klebsiella pneumoniae subsp. pneumoniae (strain ATCC 700721 / MGH 78578).